A 300-amino-acid polypeptide reads, in one-letter code: Acetylglutamate kinase (300 aa).

Substrate is bound by residues 69-70 (GG), R91, and N197.

It belongs to the acetylglutamate kinase family. ArgB subfamily.

It localises to the cytoplasm. It catalyses the reaction N-acetyl-L-glutamate + ATP = N-acetyl-L-glutamyl 5-phosphate + ADP. It participates in amino-acid biosynthesis; L-arginine biosynthesis; N(2)-acetyl-L-ornithine from L-glutamate: step 2/4. In terms of biological role, catalyzes the ATP-dependent phosphorylation of N-acetyl-L-glutamate. The sequence is that of Acetylglutamate kinase from Kineococcus radiotolerans (strain ATCC BAA-149 / DSM 14245 / SRS30216).